A 476-amino-acid chain; its full sequence is Dermokine (476 aa).

The signal sequence occupies residues Met-1 to Ala-21. Composition is skewed to gly residues over residues Ser-153–Gly-169, Trp-193–Pro-202, Gly-236–Ser-259, and Ser-268–Gly-298. Residues Ser-153 to Ser-351 are disordered. Over residues Asp-299 to Gly-315 the composition is skewed to low complexity. The segment covering Asn-316–His-326 has biased composition (gly residues).

This sequence belongs to the dermokine family. Homooligomer. Seems to be able to homodimerize and homotrimerize. O-glycosylated. In terms of tissue distribution, expressed in epidermis; in the spinous and granular layers and in placenta. Also found in the epithelia of the small intestine, macrophages of the lung and endothelial cells of the lung. Isoform 15 is expressed in epidermis and placenta. Isoform 1 is expressed in epidermis.

The protein resides in the secreted. Its function is as follows. May act as a soluble regulator of keratinocyte differentiation. The sequence is that of Dermokine (DMKN) from Homo sapiens (Human).